Reading from the N-terminus, the 127-residue chain is Large ribosomal subunit protein bL20 (127 aa).

The protein belongs to the bacterial ribosomal protein bL20 family.

Binds directly to 23S ribosomal RNA and is necessary for the in vitro assembly process of the 50S ribosomal subunit. It is not involved in the protein synthesizing functions of that subunit. The chain is Large ribosomal subunit protein bL20 from Corynebacterium urealyticum (strain ATCC 43042 / DSM 7109).